The chain runs to 408 residues: Serine/threonine transporter SstT (408 aa).

Helical transmembrane passes span 11–31, 43–63, 82–102, 141–161, 192–212, 216–236, 298–318, 339–359, and 363–383; these read LANG…VSLA, FLGS…VFIL, IVVL…LLSM, ALMT…GLAL, IGIF…AIAG, LLAV…PLIV, MGGA…TLGI, ASGV…LFGI, and VAMQ…AAET.

It belongs to the dicarboxylate/amino acid:cation symporter (DAACS) (TC 2.A.23) family.

It is found in the cell inner membrane. It carries out the reaction L-serine(in) + Na(+)(in) = L-serine(out) + Na(+)(out). The enzyme catalyses L-threonine(in) + Na(+)(in) = L-threonine(out) + Na(+)(out). Functionally, involved in the import of serine and threonine into the cell, with the concomitant import of sodium (symport system). The polypeptide is Serine/threonine transporter SstT (Shewanella sp. (strain MR-7)).